Here is a 418-residue protein sequence, read N- to C-terminus: Transmembrane protease serine 11A (418 aa).

Topologically, residues 1–18 (MMYRTVGFGTRSRNLKPW) are cytoplasmic. A helical; Signal-anchor for type II membrane protein membrane pass occupies residues 19–39 (MIAVLIVLSLTVVAVTIGLLV). Topologically, residues 40-418 (HFLVFDQKKE…RNWIASKTGI (379 aa)) are extracellular. An SEA domain is found at 47–164 (KKEYYHGSFK…SSVQVNAMSS (118 aa)). N153 carries N-linked (GlcNAc...) asparagine glycosylation. In terms of domain architecture, Peptidase S1 spans 187–417 (IASGVIAPKA…YRNWIASKTG (231 aa)). C212 and C228 form a disulfide bridge. Catalysis depends on charge relay system residues H227 and D272. N303 carries an N-linked (GlcNAc...) asparagine glycan. 2 disulfides stabilise this stretch: C337–C353 and C364–C393. The Charge relay system role is filled by S368.

The protein belongs to the peptidase S1 family. In terms of assembly, may interact with ZBTB17. In terms of tissue distribution, expressed in esophagus, liver, colon and lung. Down-regulated in esophagus cancers.

Its subcellular location is the membrane. Functionally, probable serine protease which may play a role in cellular senescence. Overexpression inhibits cell growth and induce G1 cell cycle arrest. The protein is Transmembrane protease serine 11A (TMPRSS11A) of Homo sapiens (Human).